Consider the following 366-residue polypeptide: GTPase Obg (366 aa).

The 159-residue stretch at 1-159 (MKFLDEAKVY…KTIWLRLKLI (159 aa)) folds into the Obg domain. An OBG-type G domain is found at 160 to 327 (ADAGLVGLPN…VLRALRDVIV (168 aa)). Residues 166–173 (GLPNAGKS), 191–195 (FTTLH), 212–215 (DIPG), 279–282 (SQID), and 308–310 (SAI) contribute to the GTP site. Mg(2+)-binding residues include Ser-173 and Thr-193. Positions 333–366 (DDETISQRPKKHRHKLEDRPQHENGPEESEEGEE) are disordered. Residues 347–357 (KLEDRPQHENG) show a composition bias toward basic and acidic residues.

This sequence belongs to the TRAFAC class OBG-HflX-like GTPase superfamily. OBG GTPase family. As to quaternary structure, monomer. Requires Mg(2+) as cofactor.

The protein resides in the cytoplasm. An essential GTPase which binds GTP, GDP and possibly (p)ppGpp with moderate affinity, with high nucleotide exchange rates and a fairly low GTP hydrolysis rate. Plays a role in control of the cell cycle, stress response, ribosome biogenesis and in those bacteria that undergo differentiation, in morphogenesis control. This chain is GTPase Obg, found in Allorhizobium ampelinum (strain ATCC BAA-846 / DSM 112012 / S4) (Agrobacterium vitis (strain S4)).